The chain runs to 484 residues: Glutamyl-tRNA(Gln) amidotransferase subunit A (484 aa).

Active-site charge relay system residues include lysine 76 and serine 151. Serine 175 (acyl-ester intermediate) is an active-site residue.

It belongs to the amidase family. GatA subfamily. Heterotrimer of A, B and C subunits.

The catalysed reaction is L-glutamyl-tRNA(Gln) + L-glutamine + ATP + H2O = L-glutaminyl-tRNA(Gln) + L-glutamate + ADP + phosphate + H(+). Functionally, allows the formation of correctly charged Gln-tRNA(Gln) through the transamidation of misacylated Glu-tRNA(Gln) in organisms which lack glutaminyl-tRNA synthetase. The reaction takes place in the presence of glutamine and ATP through an activated gamma-phospho-Glu-tRNA(Gln). In Alkalilimnicola ehrlichii (strain ATCC BAA-1101 / DSM 17681 / MLHE-1), this protein is Glutamyl-tRNA(Gln) amidotransferase subunit A.